The sequence spans 497 residues: Gasdermin-E (497 aa).

Residues 1–56 (MFAKATRSFLREVDAEGDLIAVSNLNDSDKSQLLSLVTKKKRFWCWQRPKYQFLSV) are membrane targeting domain. Cysteine 45 is modified (S-(2-succinyl)cysteine). A Glycyl lysine isopeptide (Lys-Gly) (interchain with G-Cter in ubiquitin) cross-link involves residue lysine 120. S-(2-succinyl)cysteine is present on residues cysteine 156, cysteine 168, and cysteine 180. Lysine 189 participates in a covalent cross-link: Glycyl lysine isopeptide (Lys-Gly) (interchain with G-Cter in ubiquitin). Residues cysteine 235, cysteine 371, cysteine 409, cysteine 418, and cysteine 491 each carry the S-(2-succinyl)cysteine modification.

It belongs to the gasdermin family. Homooligomer; homooligomeric ring-shaped pore complex containing 27-28 subunits when inserted in the membrane. Cleavage at Asp-270 by CASP3 (mature and uncleaved precursor forms) or granzyme B (GZMB) relieves autoinhibition and is sufficient to initiate pyroptosis. In terms of processing, succination by the Krebs cycle intermediate fumarate, which leads to S-(2-succinyl)cysteine residues, inhibits processing by caspases, and ability to initiate pyroptosis. Succination modification is catalyzed by a non-enzymatic reaction caused by an accumulation of fumarate. Post-translationally, ubiquitinated on Lys-120 and Lys-189 via 'Lys-48'-linked polyubiquitin chains, leading to proteasomal degradation. Deubiquitinated by USP48, leading to increased stability. Palmitoylated.

The protein resides in the cell membrane. It localises to the cytoplasm. It is found in the cytosol. Its activity is regulated as follows. The full-length protein before cleavage is inactive: intramolecular interactions between N- and C-terminal domains mediate autoinhibition in the absence of activation signal. The intrinsic pyroptosis-inducing activity is carried by the released N-terminal moiety (Gasdermin-E, N-terminal) following cleavage by CASP3 or granzyme B (GZMB). Activated by NLRP1 in the absence of GSDMD expression: NLRP1 cleaves and activates CASP8, promoting downstream activation of CASP3 and subsequent activation of GSDME. Precursor of a pore-forming protein that converts non-inflammatory apoptosis to pyroptosis. This form constitutes the precursor of the pore-forming protein: upon cleavage, the released N-terminal moiety (Gasdermin-E, N-terminal) binds to membranes and forms pores, triggering pyroptosis. In terms of biological role, pore-forming protein produced by cleavage by CASP3 or granzyme B (GZMB), which converts non-inflammatory apoptosis to pyroptosis or promotes granzyme-mediated pyroptosis, respectively. After cleavage, moves to the plasma membrane, homooligomerizes within the membrane and forms pores of 10-15 nanometers (nm) of inner diameter, allowing the release of mature interleukins (IL1B and IL16) and triggering pyroptosis. Binds to inner leaflet lipids, bisphosphorylated phosphatidylinositols, such as phosphatidylinositol (4,5)-bisphosphate. Cleavage by CASP3 switches CASP3-mediated apoptosis induced by TNF or danger signals, such as chemotherapy drugs, to pyroptosis. Mediates secondary necrosis downstream of the mitochondrial apoptotic pathway and CASP3 activation as well as in response to viral agents. Exhibits bactericidal activity. Cleavage by GZMB promotes tumor suppressor activity by triggering robust anti-tumor immunity. Suppresses tumors by mediating granzyme-mediated pyroptosis in target cells of natural killer (NK) cells: cleavage by granzyme B (GZMB), delivered to target cells from NK-cells, triggers pyroptosis of tumor cells and tumor suppression. May play a role in the p53/TP53-regulated cellular response to DNA damage. The chain is Gasdermin-E from Equus caballus (Horse).